The primary structure comprises 6631 residues: MASSLKQGVSPKLRDVILVSKDIPEQLCDALFFYTSHNPKDYADAFAVRQKFDRNLQTGKQFKFETVCGLFLLKGVDKITPGVPAKVLKATSKLADLEDIFGVSPFARKYRELLKTACQWSLTVETLDARAQTLDEIFDPTEILWLQVAAKIQVSAMAMRRLVGEVTAKVMDALGSNMSALFQIFKQQIVRIFQKALAIFENVSELPQRIAALKMAFAKCAKSITVVVMERTLVVREFAGTCLASINGAVAKFFEELPNGFMGAKIFTTLAFFREAAVKIVDNIPNAPRGTKGFEVVGNAKGTQVVVRGMRNDLTLLDQKAEIPVESEGWSAILGGHLCYVFKSGDRFYAAPLSGNFALHDVHCCERVVCLSDGVTPEINDGLILAAIYSSFSVAELVAAIKRGEPFKFLGHKFVYAKDAAVSFTLAKAATIADVLKLFQSARVKVEDVWSSLTEKSFEFWRLAYGKVRNLEEFVKTCFCKAQMAIVILATVLGEGIWHLVSQVIYKVGGLFTKVVDFCEKYWKGFCAQLKRAKLIVTETLCVLKGVAQHCFQLLLDAIQFMYKSFKKCALGRIHGDLLFWKGGVHKIIQEGDEIWFDAIDSIDVEDLGVVQEKLIDFDVCDNVTLPENQPGHMVQIEDDGKNYMFFRFKKDENIYYTPMSQLGAINVVCKAGGKTVTFGETTVQEIPPPDVVFIKVSIECCGEPWNTIFKKAYKEPIEVETDLTVEQLLSVVYEKMCDDLKLFPEAPEPPPFENVTLVDKNGKDLDCIKSCHLIYRDYESDDDIEEEDAEECDTDSGDAEECDTNLECEEEDEDTKVLALIQDPASNKYPLPLDDDYSVYNGCIVHKDALDVVNLPSGEETFVVNNCFEGAVKALPQKVIDVLGDWGEAVDAQEQLCQQESTRVISEKSVEGFTGSCDAMAEQAIVEEQEIVPVVEQSQDVVVFTPADLEVVKETAEEVDEFILISAVPKEEVVSQEKEEPQVEQEPTLVVKAQREKKAKKFKVKPATCEKPKFLEYKTCVGDLAVVIAKALDEFKEFCIVNAANEHMSHGGGVAKAIADFCGPDFVEYCADYVKKHGPQQKLVTPSFVKGIQCVNNVVGPRHGDSNLREKLVAAYKSVLVGGVVNYVVPVLSSGIFGVDFKISIDAMREAFKGCAIRVLLFSLSQEHIDYFDATCKQKTIYLTEDGVKYRSVVLKPGDSLGQFGQVFARNKVVFSADDVEDKEILFIPTTDKTILEYYGLDAQKYVTYLQTLAQKWDVQYRDNFVILEWRDGNCWISSAIVLLQAAKIRFKGFLAEAWAKLLGGDPTDFVAWCYASCNAKVGDFSDANWLLANLAEHFDADYTNALLKKCVSCNCGVKSYELRGLEACIQPVRAPNLLHFKTQYSNCPTCGASSTDEVIEASLPYLLLFATDGPATVDCDENAVGTVVFIGSTNSGHCYTQADGKAFDNLAKDRKFGRKSPYITAMYTRFSLRSENPLLVVEHSKGKAKVVKEDVSNLATSSKASFDDLTDFEQWYDSNIYESLKVQETPDNLDEYVSFTTKEDSKLPLTLKVRGIKSVVDFRSKDGFTYKLTPDTDENSKTPVYYPVLDSISLRAIWVEGSANFVVGHPNYYSKSLRIPTFWENAESFVKMGYKIDGVTMGLWRAEHLNKPNLERIFNIAKKAIVGSSVVTTQCGKILVKAATYVADKVGDGVVRNITDRIKGLCGFTRGHFEKKMSLQFLKTLVFFFFYFLKASSKSLVSSYKIVLCKVVFATLLIVWFIYTSNPVVFTGIRVLDFLFEGSLCGPYNDYGKDSFDVLRYCAGDFTCRVCLHDRDSLHLYKHAYSVEQIYKDAASGINFNWNWLYLVFLILFVKPVAGFVIICYCVKYLVLSSTVLQTGVGFLDWFVKTVFTHFNFMGAGFYFWLFYKIYVQVHHILYCKDVTCEVCKRVARSNRQEVSVVVGGRKQIVHVYTNSGYNFCKRHNWYCRNCDDYGHQNTFMSPEVAGELSEKLKRHVKPTAYAYHVVYEACVVDDFVNLKYKAAIPGKDNASSAVKCFSVTDFLKKAVFLKEALKCEQISNDGFIVCNTQSAHALEEAKNAAVYYAQYLCKPILILDQALYEQLIVEPVSKSVIDKVCSILSNIISVDTAALNYKAGTLRDALLSITKDEEAVDMAIFCHNHEVEYTGDGFTNVIPSYGMDTDKLTPRDRGFLINADASIANLRVKNAPPVVWKFSDLIKLSDSCLKYLISATVKSGGRFFITKSGAKQVISCHTQKLLVEKKAGGVINNTFKWFMSCFKWLFVFYILFTACCLGYYYMEMNKSFVHPMYDVNSTLHVEGFKVIDKGVIREIVSEDNCFSNKFVNFDAFWGKSYENNKNCPIVTVVIDGDGTVAVGVPGFVSWVMDGVMFVHMTQTDRRPWYIPTWFNREIVGYTQDSIITEGSFYTSIALFSARCLYLTASNTPQLYCFNGDNDAPGALPFGSIIPHRVYFQPNGVRLIVPQQILHTPYIVKFVSDSYCRGSVCEYTKPGYCVSLDSQWVLFNDEYISKPGVFCGSTVRELMFNMVSTFFTGVNPNIYIQLATMFLILVVIVLIFAMVIKFQGVFKAYATIVFTIMLVWVINAFVLCVHSYNSVLAVILLVLYCYASMVTSRNTAIIMHCWLVFTFGLIVPTWLACCYLGFILYMYTPLVFWCYGTTKNTRKLYDGNEFVGNYDLAAKSTFVIRGTEFVKLTNEIGDKFEAYLSAYARLKYYSGTGSEQDYLQACRAWLAYALDQYRNSGVEVVYTPPRYSIGVSRLQAGFKKLVSPSSAVEKCIVSVSYRGNNLNGLWLGDSIYCPRHVLGKFSGDQWGDVLNLANNHEFEVVTQNGVTLNVVSRRLKGAVLILQTAVANAETPKYKFVKANCGDSFTIACSYGGTVIGLYPVTMRSNGTIRASFLAGACGSVGFNIEKGVVNFFYMHHLELPNALHTGTDLMGEFYGGYVDEEVAQRVPPDNLVTNNIVAWLYAAIISVKESSFSQPKWLESTTVSIEDYNRWASDNGFTPFSTSTAITKLSAITGVDVCKLLRTIMVKSAQWGSDPILGQYNFEDELTPESVFNQVGGVRLQSSFVRKATSWFWSRCVLACFLFVLCAIVLFTAVPLKFYVHAAVILLMAVLFISFTVKHVMAYMDTFLLPTLITVIIGVCAEVPFIYNTLISQVVIFLSQWYDPVVFDTMVPWMLLPLVLYTAFKCVQGCYMNSFNTSLLMLYQFMKLGFVIYTSSNTLTAYTEGNWELFFELVHTIVLANVSSNSLIGLIVFKCAKWMLYYCNATYFNNYVLMAVMVNGIGWLCTCYFGLYWWVNKVFGLTLGKYNFKVSVDQYRYMCLHKVNPPKTVWEVFTTNILIQGIGGDRVLPIATVQSKLSDVKCTTVVLMQLLTKLNVEANSKMHAYLVELHNKILASDDVGECMDNLLGMLITLFCIDSTIDLGEYCDDILKRSTVLQSVTQEFSHIPSYAEYERAKSIYEKVLADSKNGGVTQQELAAYRKAANIAKSVFDRDLAVQKKLDSMAERAMTTMYKEARVTDRRAKLVSSLHALLFSMLKKIDSEKLNVLFDQANSGVVPLATVPIVCSNKLTLVIPDPETWVKCVEGVHVTYSTVVWNIDCVTDADGTELHPTSTGSGLTYCISGDNIAWPLKVNLTRNGHNKVDVALQNNELMPHGVKTKACVAGVDQAHCSVESKCYYTSISGSSVVAAITSSNPNLKVASFLNEAGNQIYVDLDPPCKFGMKVGDKVEVVYLYFIKNTRSIVRGMVLGAISNVVVLQSKGHETEEVDAVGILSLCSFAVDPADTYCKYVAAGNQPLGNCVKMLTVHNGSGFAITSKPSPTPDQDSYGGASVCLYCRAHIAHPGGAGNLDGRCQFKGSFVQIPTTEKDPVGFCLRNKVCTVCQCWIGYGCQCDSLRQPKPSVQSVAVASGFDKNYLNRVRGSSEARLIPLANGCDPDVVKRAFDVCNKESAGMFQNLKRNCARFQEVRDTEDGNLEYCDSYFVVKQTTPSNYEHEKACYEDLKSEVTADHDFFVFNKNIYNISRQRLTKYTMMDFCYALRHFDPKDCEVLKEILVTYGCIEDYHPKWFEENKDWYDPIENPKYYAMLAKMGPIVRRALLNAIEFGNLMVEKGYVGVITLDNQDLNGKFYDFGDFQKTAPGAGVPVFDTYYSYMMPIIAMTDALAPERYFEYDVHKGYKSYDLLKYDYTEEKQDLFQKYFKYWDQEYHPNCRDCSDDRCLIHCANFNILFSTLVPQTSFGNLCRKVFVDGVPFIATCGYHSKELGVIMNQDNTMSFSKMGLSQLMQFVGDPALLVGTSNKLVDLRTSCFSVCALASGITHQTVKPGHFNKDFYDFAEKAGMFKEGSSIPLKHFFYPQTGNAAINDYDYYRYNRPTMFDIRQLLFCLEVTSKYFECYEGGCIPASQVVVNNLDKSAGYPFNKFGKARLYYEMSLEEQDQLFESTKKNVLPTITQMNLKYAISAKNRARTVAGVSILSTMTNRQFHQKILKSIVNTRNAPVVIGTTKFYGGWDNMLRNLIQGVEDPILMGWDYPKCDRAMPNLLRIAASLVLARKHTNCCTWSERVYRLYNECAQVLSETVLATGGIYVKPGGTSSGDATTAYANSVFNIIQATSANVARLLSVITRDIVYDDIKSLQYELYQQVYRRVNFDPAFVEKFYSYLCKNFSLMILSDDGVVCYNNTLAKQGLVADISGFREVLYYQNNVFMADSKCWVEPDLEKGPHEFCSQHTMLVEVDGEPRYLPYPDPSRILCACVFVDDLDKTESVAVMERYIALAIDAYPLVHHENEEYKKVFFVLLSYIRKLYQELSQNMLMDYSFVMDIDKGSKFWEQEFYENMYRAPTTLQSCGVCVVCNSQTILRCGNCIRKPFLCCKCCYDHVMHTDHKNVLSINPYICSQPGCGEADVTKLYLGGMSYFCGNHKPKLSIPLVSNGTVFGIYRANCAGSENVDDFNQLATTNWSTVEPYILANRCVDSLRRFAAETVKATEELHKQQFASAEVREVLSDRELILSWEPGKTRPPLNRNYVFTGFHFTRTSKVQLGDFTFEKGEGKDVVYYRATSTAKLSVGDIFVLTSHNVVSLIAPTLCPQQTFSRFVNLRPNVMVPACFVNNIPLYHLVGKQKRTTVQGPPGSGKSHFAIGLAAYFSNARVVFTACSHAAVDALCEKAFKFLKVDDCTRIVPQRTTIDCFSKFKANDTGKKYIFSTINALPEVSCDILLVDEVSMLTNYELSFINGKINYQYVVYVGDPAQLPAPRTLLNGSLSPKDYNVVTNLMVCVKPDIFLAKCYRCPKEIVDTVSTLVYDGKFIANNPESRQCFKVIVNNGNSDVGHESGSAYNITQLEFVKDFVCRNKEWREATFISPYNAMNQRAYRMLGLNVQTVDSSQGSEYDYVIFCVTADSQHALNINRFNVALTRAKRGILVVMRQRDELYSALKFIELDSVASLQGTGLFKICNKEFSGVHPAYAVTTKALAATYKVNDELAALVNVEAGSEITYKHLISLLGFKMSVNVEGCHNMFITRDEAIRNVRGWVGFDVEATHACGTNIGTNLPFQVGFSTGADFVVTPEGLVDTSIGNNFEPVNSKAPPGEQFNHLRALFKSAKPWHVVRPRIVQMLADNLCNVSDCVVFVTWCHGLELTTLRYFVKIGKDQVCSCGSRATTFNSHTQAYACWKHCLGFDFVYNPLLVDIQQWGYSGNLQFNHDLHCNVHGHAHVASADAIMTRCLAINNAFCQDVNWDLTYPHIANEDEVNSSCRYLQRMYLNACVDALKVNVVYDIGNPKGIKCVRRGDLNFRFYDKNPIVPNVKQFEYDYNQHKDKFADGLCMFWNCNVDCYPDNSLVCRYDTRNLSVFNLPGCNGGSLYVNKHAFHTPKFDRTSFRNLKAMPFFFYDSSPCETIQLDGVAQDLVSLATKDCITKCNIGGAVCKKHAQMYADFVTSYNAAVTAGFTFWVTNNFNPYNLWKSFSALQSIDNIAYNMYKGGHYDAIAGEMPTIVTGDKVFVIDQGVEKAVFFNQTILPTSVAFELYAKRNIRTLPNNRILKGLGVDVTNGFVIWDYTNQTPLYRNTVKVCAYTDIEPNGLIVLYDDRYGDYQSFLAADNAVLVSTQCYKRYSYVEIPSNLLVQNGIPLKDGANLYVYKRVNGAFVTLPNTLNTQGRSYETFEPRSDVERDFLDMSEESFVEKYGKELGLQHILYGEVDKPQLGGLHTVIGMCRLLRANKLNAKSVTNSDSDVMQNYFVLADNGSYKQVCTVVDLLLDDFLELLRNILKEYGTNKSKVVTVSIDYHSINFMAWFEDGIIKTCYPQLQSAWTCGYNMPELYKVQNCVMEPCNIPNYGVGIALPSGIMMNVAKYTQLCQYLSKTTMCVPHNMRVMHFGAGSDKGVAPGSTVLKQWLPEGTLLVDNDIVDYVSDAHVSVLSDCNKYKTEHKFDLVISDMYTDNDSKRKHEGVIANNGNDDVFIYLSSFLRNNLALGGSFAVKVTETSWHEVLYDIAQDCAWWTMFCTAVNASSSEAFLVGVNYLGASEKVKVSGKTLHANYIFWRNCNYLQTSAYSIFDVAKFDLRLKATPVVNLKTEQKTDLVFNLIKCGKLLVRDVGNTSFTSDSFVCTM.

At 1-1752 (MASSLKQGVS…VSSYKIVLCK (1752 aa)) the chain is on the cytoplasmic side. Ubiquitin-like domains are found at residues 675 to 780 (KTVT…RDYE) and 1177 to 1229 (CKQK…ILFI). The Macro domain occupies 1005–1181 (VKPATCEKPK…YFDATCKQKT (177 aa)). Positions 1238–1499 (EYYGLDAQKY…AKVVKEDVSN (262 aa)) constitute a Peptidase C16 domain. The For PL-PRO activity role is filled by cysteine 1276. The segment at 1355–1392 (CNCGVKSYELRGLEACIQPVRAPNLLHFKTQYSNCPTC) adopts a C4-type; degenerate zinc-finger fold. Catalysis depends on for PL-PRO activity residues histidine 1439 and aspartate 1450. Residues 1753 to 1773 (VVFATLLIVWFIYTSNPVVFT) form a helical membrane-spanning segment. The segment at 1753–1866 (VVFATLLIVW…KPVAGFVIIC (114 aa)) is HD1. A 3Ecto domain is found at 1771 to 1835 (VFTGIRVLDF…AYSVEQIYKD (65 aa)). Topologically, residues 1774-1845 (GIRVLDFLFE…AASGINFNWN (72 aa)) are lumenal. Intrachain disulfides connect cysteine 1787/cysteine 1813 and cysteine 1804/cysteine 1810. The helical transmembrane segment at 1846–1866 (WLYLVFLILFVKPVAGFVIIC) threads the bilayer. Over 1867–2282 (YCVKYLVLSS…TFKWFMSCFK (416 aa)) the chain is Cytoplasmic. The tract at residues 1913-2003 (YVQVHHILYC…KLKRHVKPTA (91 aa)) is Y1. Residues 1913–2265 (YVQVHHILYC…HTQKLLVEKK (353 aa)) enclose the CoV Nsp3 Y domain. Positions 1917, 1922, 1927, 1930, 1963, 1966, 1970, and 1973 each coordinate Zn(2+). Residues 1917–1930 (HHILYCKDVTCEVC) form a ZF1 region. The ZF2 stretch occupies residues 1963–1973 (CKRHNWYCRNC). Residues 2004-2106 (YAYHVVYEAC…ILDQALYEQL (103 aa)) form a Y2 region. Residues 2004–2265 (YAYHVVYEAC…HTQKLLVEKK (262 aa)) form a coV-Y region. The interval 2107-2165 (IVEPVSKSVIDKVCSILSNIISVDTAALNYKAGTLRDALLSITKDEEAVDMAIFCHNHE) is Y3. Residues 2166 to 2265 (VEYTGDGFTN…HTQKLLVEKK (100 aa)) are Y4. The chain crosses the membrane as a helical span at residues 2283-2303 (WLFVFYILFTACCLGYYYMEM). The segment at 2283–2666 (WLFVFYILFT…LACCYLGFIL (384 aa)) is HD2. The Lumenal portion of the chain corresponds to 2304–2561 (NKSFVHPMYD…FFTGVNPNIY (258 aa)). A helical transmembrane segment spans residues 2562–2582 (IQLATMFLILVVIVLIFAMVI). The Cytoplasmic portion of the chain corresponds to 2583-2613 (KFQGVFKAYATIVFTIMLVWVINAFVLCVHS). Residues 2614–2634 (YNSVLAVILLVLYCYASMVTS) form a helical membrane-spanning segment. At 2635 to 2645 (RNTAIIMHCWL) the chain is on the lumenal side. A helical membrane pass occupies residues 2646–2666 (VFTFGLIVPTWLACCYLGFIL). Topologically, residues 2667–3098 (YMYTPLVFWC…SSFVRKATSW (432 aa)) are cytoplasmic. Positions 2686-2781 (LYDGNEFVGN…RYSIGVSRLQ (96 aa)) constitute a Nsp4C domain. One can recognise a Peptidase C30 domain in the interval 2782 to 3088 (AGFKKLVSPS…FNQVGGVRLQ (307 aa)). Residues histidine 2822 and cysteine 2924 each act as for 3CL-PRO activity in the active site. A helical transmembrane segment spans residues 3099–3119 (FWSRCVLACFLFVLCAIVLFT). Residues 3099 to 3319 (FWSRCVLACF…WLCTCYFGLY (221 aa)) are HD3. Residues 3120 to 3123 (AVPL) are Lumenal-facing. Residues 3124–3144 (KFYVHAAVILLMAVLFISFTV) traverse the membrane as a helical segment. At 3145-3153 (KHVMAYMDT) the chain is on the cytoplasmic side. A helical transmembrane segment spans residues 3154–3174 (FLLPTLITVIIGVCAEVPFIY). Over 3175–3190 (NTLISQVVIFLSQWYD) the chain is Lumenal. The chain crosses the membrane as a helical span at residues 3191 to 3211 (PVVFDTMVPWMLLPLVLYTAF). The Cytoplasmic portion of the chain corresponds to 3212 to 3259 (KCVQGCYMNSFNTSLLMLYQFMKLGFVIYTSSNTLTAYTEGNWELFFE). The helical transmembrane segment at 3260-3280 (LVHTIVLANVSSNSLIGLIVF) threads the bilayer. Topologically, residues 3281 to 3298 (KCAKWMLYYCNATYFNNY) are lumenal. The chain crosses the membrane as a helical span at residues 3299–3319 (VLMAVMVNGIGWLCTCYFGLY). Residues 3320-6631 (WWVNKVFGLT…FTSDSFVCTM (3312 aa)) lie on the Cytoplasmic side of the membrane. Residues 3382–3464 (SKLSDVKCTT…DILKRSTVLQ (83 aa)) form the RdRp Nsp7 cofactor domain. A RdRp Nsp8 cofactor domain is found at 3465–3674 (SVTQEFSHIP…GHNKVDVALQ (210 aa)). Residues 3675–3785 (NNELMPHGVK…GAISNVVVLQ (111 aa)) enclose the Nsp9 ssRNA-binding domain. The ExoN/MTase coactivator domain maps to 3787–3928 (KGHETEEVDA…CDSLRQPKPS (142 aa)). Zn(2+) contacts are provided by cysteine 3860, cysteine 3863, histidine 3869, cysteine 3880, cysteine 3906, cysteine 3909, cysteine 3917, and cysteine 3919. 2 zinc fingers span residues 3860–3880 (CLYC…DGRC) and 3906–3919 (CTVC…GCQC). The 259-residue stretch at 3942–4200 (YLNRVRGSSE…APERYFEYDV (259 aa)) folds into the NiRAN domain. The Nsp12 Interface domain occupies 4205 to 4303 (KSYDLLKYDY…MNQDNTMSFS (99 aa)). 5 residues coordinate Zn(2+): histidine 4234, cysteine 4240, cysteine 4245, cysteine 4249, and cysteine 4426. The 567-residue stretch at 4304 to 4870 (KMGLSQLMQF…NMYRAPTTLQ (567 aa)) folds into the Nsp12 RNA-dependent RNA polymerase domain. Residues 4306–4519 (GLSQLMQFVG…HQKILKSIVN (214 aa)) form a rdRp Fingers N-ter region. Positions 4520 to 4558 (TRNAPVVIGTTKFYGGWDNMLRNLIQGVEDPILMGWDYP) are rdRp Palm N-ter. One can recognise a RdRp catalytic domain in the interval 4550–4712 (PILMGWDYPK…CYNNTLAKQG (163 aa)). The rdRp Fingers C-ter stretch occupies residues 4559–4617 (KCDRAMPNLLRIAASLVLARKHTNCCTWSERVYRLYNECAQVLSETVLATGGIYVKPGG). Residues histidine 4580, cysteine 4583, and cysteine 4584 each contribute to the Zn(2+) site. The tract at residues 4618–4753 (TSSGDATTAY…EKGPHEFCSQ (136 aa)) is rdRp Palm C-ter. Residues serine 4697, aspartate 4698, and aspartate 4699 contribute to the active site. The segment at 4754–4870 (HTMLVEVDGE…NMYRAPTTLQ (117 aa)) is rdRp Thumb. The CV ZBD domain occupies 4871-4983 (SCGVCVVCNS…DDFNQLATTN (113 aa)). 12 residues coordinate Zn(2+): cysteine 4875, cysteine 4878, cysteine 4886, cysteine 4889, cysteine 4896, cysteine 4899, histidine 4903, histidine 4909, cysteine 4920, cysteine 4925, cysteine 4942, and histidine 4945. One can recognise a (+)RNA virus helicase ATP-binding domain in the interval 5127–5307 (MVPACFVNNI…MVCVKPDIFL (181 aa)). 5152 to 5159 (GPPGSGKS) contacts ATP. The 172-residue stretch at 5308–5479 (AKCYRCPKEI…QGTGLFKICN (172 aa)) folds into the (+)RNA virus helicase C-terminal domain. The region spanning 5541 to 5755 (MFITRDEAIR…RCLAINNAFC (215 aa)) is the ExoN domain. Active-site residues include aspartate 5559, glutamate 5561, and glutamate 5660. Residues cysteine 5676, cysteine 5678, cysteine 5694, histidine 5697, histidine 5725, cysteine 5729, and histidine 5732 each contribute to the Zn(2+) site. Active-site residues include histidine 5736 and aspartate 5741. A Zn(2+)-binding site is contributed by cysteine 5747. The N7-MTase domain occupies 5764–5991 (YPHIANEDEV…NLWKSFSALQ (228 aa)). 5799 to 5805 (DIGNPKG) contributes to the S-adenosyl-L-methionine binding site. Positions 5879-5893 (CNGGSLYVNKHAFHT) are gpppA-binding. Zn(2+) contacts are provided by cysteine 5917, cysteine 5937, cysteine 5948, and histidine 5951. Residues 5992-6052 (SIDNIAYNMY…SVAFELYAKR (61 aa)) enclose the Nsp15 N-terminal oligomerization domain. Positions 6053 to 6168 (NIRTLPNNRI…VYKRVNGAFV (116 aa)) constitute an AV-Nsp11N/CoV-Nsp15M domain. Positions 6185-6326 (EPRSDVERDF…EDGIIKTCYP (142 aa)) constitute a NendoU domain. Active-site residues include histidine 6214, histidine 6229, lysine 6269, lysine 6373, aspartate 6457, lysine 6501, and glutamate 6534. Residues 6329–6628 (QSAWTCGYNM…NTSFTSDSFV (300 aa)) form the Nidovirus-type SAM-dependent 2'-O-MTase domain.

Belongs to the coronaviruses polyprotein 1ab family. Interacts with host PHB and PHB2. As to quaternary structure, interacts with papain-like protease and non-structural protein 6. In terms of assembly, monomer. Homodimer. Only the homodimer shows catalytic activity. Eight copies of nsp7 and eight copies of nsp8 assemble to form a heterohexadecamer dsRNA-encircling ring structure. As to quaternary structure, eight copies of nsp7 and eight copies of nsp8 assemble to form a heterohexadecamer dsRNA-encircling ring structure. Interacts with ORF6 protein. In terms of assembly, homodimer. Homododecamer. Interacts with proofreading exoribonuclease nsp14 and 2'-O-methyltransferase nsp16; these interactions enhance nsp14 and nsp16 enzymatic activities. As to quaternary structure, interacts with host DDX1 (via C-terminus). Interacts with non-structural protein 10. In terms of assembly, homohexamer. Interacts with non-structural protein 10. Mn(2+) serves as cofactor. Requires Zn(2+) as cofactor. Post-translationally, specific enzymatic cleavages in vivo by its own proteases yield mature proteins. 3C-like proteinase nsp5 liberates nsps 6-16 from the polyprotein. Papain-like and 3C-like proteinases are autocatalytically processed. N-glycosylated.

It is found in the host endoplasmic reticulum membrane. Its subcellular location is the host cytoplasm. The protein resides in the host perinuclear region. It localises to the host endoplasmic reticulum. The protein localises to the host endoplasmic reticulum-Golgi intermediate compartment. It catalyses the reaction Thiol-dependent hydrolysis of ester, thioester, amide, peptide and isopeptide bonds formed by the C-terminal Gly of ubiquitin (a 76-residue protein attached to proteins as an intracellular targeting signal).. The enzyme catalyses RNA(n) + a ribonucleoside 5'-triphosphate = RNA(n+1) + diphosphate. The catalysed reaction is ATP + H2O = ADP + phosphate + H(+). It carries out the reaction a 5'-end diphospho-ribonucleoside in mRNA + GTP + H(+) = a 5'-end (5'-triphosphoguanosine)-ribonucleoside in mRNA + diphosphate. It catalyses the reaction uridylyl-uridylyl-ribonucleotide-RNA = a 3'-end uridylyl-2',3'-cyclophospho-uridine-RNA + a 5'-end dephospho-ribonucleoside-RNA. The enzyme catalyses a 5'-end (N(7)-methyl 5'-triphosphoguanosine)-ribonucleoside in mRNA + S-adenosyl-L-methionine = a 5'-end (N(7)-methyl 5'-triphosphoguanosine)-(2'-O-methyl-ribonucleoside) in mRNA + S-adenosyl-L-homocysteine + H(+). Its function is as follows. Multifunctional protein involved in the transcription and replication of viral RNAs. Contains the proteinases responsible for the cleavages of the polyprotein. May play a role in the modulation of host cell survival signaling pathway by interacting with host PHB and PHB2. Indeed, these two proteins play a role in maintaining the functional integrity of the mitochondria and protecting cells from various stresses. Functionally, responsible for the cleavages located at the N-terminus of the replicase polyprotein. In addition, PL-PRO possesses a deubiquitinating/deISGylating activity and processes both 'Lys-48'- and 'Lys-63'-linked polyubiquitin chains from cellular substrates. In terms of biological role, plays a role in host membrane rearrangement that leads to creation of cytoplasmic double-membrane vesicles (DMV) necessary for viral replication. Alone is able to induce paired membranes. Coexpression of nsp3 and nsp4 does not result in the formation of DMVs. Its function is as follows. Responsible for the majority of cleavages as it cleaves the C-terminus of replicase polyprotein at 11 sites. Recognizes substrates containing the core sequence [ILMVF]-Q-|-[SGACN]. Inhibited by the substrate-analog Cbz-Val-Asn-Ser-Thr-Leu-Gln-CMK. Forms a hexadecamer with nsp8 (8 subunits of each) that may participate in viral replication by acting as a primase. Alternatively, may synthesize substantially longer products than oligonucleotide primers. Functionally, forms a hexadecamer with nsp7 (8 subunits of each) that may participate in viral replication by acting as a primase. Alternatively, may synthesize substantially longer products than oligonucleotide primers. In terms of biological role, forms a primer, NSP9-pU, which is utilized by the polymerase for the initiation of RNA chains. Interacts with ribosome signal recognition particle RNA (SRP). Together with NSP8, suppress protein integration into the cell membrane, thereby disrupting host immune defenses. Its function is as follows. Plays a pivotal role in viral transcription by stimulating both nsp14 3'-5' exoribonuclease and nsp16 2'-O-methyltransferase activities. Therefore plays an essential role in viral mRNAs cap methylation. RNA-directed RNA polymerase that catalyzes the transcription of viral genomic and subgenomic RNAs. Acts in complex with nsp7 and nsp8 to transcribe both the minus and positive strands of genomic RNA. The kinase-like NiRAN domain of NSP12 attaches one or more nucleotides to the amino terminus of NSP9, forming a covalent RNA-protein intermediate that serves as transcription/replication primer. Subgenomic RNAs (sgRNAs) are formed by discontinuous transcription: The polymerase has the ability to pause at transcription-regulating sequences (TRS) and jump to the leader TRS, resulting in a major deletion. This creates a series of subgenomic RNAs that are replicated, transcribed and translated. In addition, Nsp12 is a subunit of the viral RNA capping enzyme that catalyzes the RNA guanylyltransferase reaction for genomic and sub-genomic RNAs. Subsequently, the NiRAN domain transfers RNA to GDP, and forms the core cap structure GpppA-RNA. Functionally, multi-functional protein with a zinc-binding domain in N-terminus displaying RNA and DNA duplex-unwinding activities with 5' to 3' polarity. Activity of helicase is dependent on magnesium. In terms of biological role, enzyme possessing two different activities: an exoribonuclease activity acting on both ssRNA and dsRNA in a 3' to 5' direction and a N7-guanine methyltransferase activity. Acts as a proofreading exoribonuclease for RNA replication, thereby lowering The sensitivity of the virus to RNA mutagens. Its function is as follows. Plays a role in viral transcription/replication and prevents the simultaneous activation of host cell dsRNA sensors, such as MDA5/IFIH1, OAS, and PKR. Acts by degrading the 5'-polyuridines generated during replication of the poly(A) region of viral genomic and subgenomic RNAs. Catalyzes a two-step reaction in which a 2'3'-cyclic phosphate (2'3'-cP) is first generated by 2'-O transesterification, which is then hydrolyzed to a 3'-phosphate (3'-P). If not degraded, poly(U) RNA would hybridize with poly(A) RNA tails and activate host dsRNA sensors. Methyltransferase that mediates mRNA cap 2'-O-ribose methylation to the 5'-cap structure of viral mRNAs. N7-methyl guanosine cap is a prerequisite for binding of nsp16. Therefore plays an essential role in viral mRNAs cap methylation which is essential to evade immune system. The protein is Replicase polyprotein 1ab (rep) of Gallus gallus (Chicken).